The primary structure comprises 218 residues: NAD(P)H-quinone oxidoreductase subunit I (218 aa).

2 consecutive 4Fe-4S ferredoxin-type domains span residues Gly-55 to Val-84 and Arg-95 to Glu-124. [4Fe-4S] cluster is bound by residues Cys-64, Cys-67, Cys-70, Cys-74, Cys-104, Cys-107, Cys-110, and Cys-114. The segment at Glu-168–Glu-218 is disordered. The segment covering Thr-208–Glu-218 has biased composition (polar residues).

Belongs to the complex I 23 kDa subunit family. NDH-1 is composed of at least 11 different subunits. [4Fe-4S] cluster is required as a cofactor.

Its subcellular location is the cellular thylakoid membrane. The catalysed reaction is a plastoquinone + NADH + (n+1) H(+)(in) = a plastoquinol + NAD(+) + n H(+)(out). It carries out the reaction a plastoquinone + NADPH + (n+1) H(+)(in) = a plastoquinol + NADP(+) + n H(+)(out). NDH-1 shuttles electrons from an unknown electron donor, via FMN and iron-sulfur (Fe-S) centers, to quinones in the respiratory and/or the photosynthetic chain. The immediate electron acceptor for the enzyme in this species is believed to be plastoquinone. Couples the redox reaction to proton translocation, and thus conserves the redox energy in a proton gradient. The protein is NAD(P)H-quinone oxidoreductase subunit I of Synechococcus sp. (strain WH7803).